The primary structure comprises 278 residues: MNPNSNSITKSHLFHIVNPSPWPILTSFALLLLVIGGISSMHGYKFNMYILSAGVISVIYCLYSWWRDVVQEGIVEHQHTSPVRKGLKIGMVLFILTETVFFSVFFASFLKSSISPVGILDGVWVVKQGIWPPPTIKTFDPFDIPFINTLILLLSGTTITGAHYALEEKNQKDCVTALAFTIVLGIFFTLMQVYEYYHAEFKFTDGIYASNFYLATGFHGAHVVIGTIFLIVCYFRAKRGDFTTEGNGHLGFEFAAWYWHFVDVVWLFLFTFVYILGS.

6 helical membrane passes run 21 to 41, 46 to 66, 89 to 109, 174 to 194, 212 to 232, and 256 to 276; these read PWPI…ISSM, FNMY…YSWW, IGMV…FASF, CVTA…MQVY, FYLA…FLIV, and AWYW…VYIL.

The protein belongs to the cytochrome c oxidase subunit 3 family.

Its subcellular location is the cell membrane. The catalysed reaction is 4 Fe(II)-[cytochrome c] + O2 + 8 H(+)(in) = 4 Fe(III)-[cytochrome c] + 2 H2O + 4 H(+)(out). The polypeptide is Probable cytochrome c oxidase subunit 3 (ctaE) (Rickettsia prowazekii (strain Madrid E)).